Here is a 256-residue protein sequence, read N- to C-terminus: Diacetyl reductase [(S)-acetoin forming] (256 aa).

NAD(+) contacts are provided by residues 6-33 (LVTG…AIAD) and Asp59. Ser139 provides a ligand contact to substrate. Tyr152 functions as the Proton acceptor in the catalytic mechanism. An NAD(+)-binding site is contributed by Lys156.

The protein belongs to the short-chain dehydrogenases/reductases (SDR) family. As to quaternary structure, homotetramer.

It carries out the reaction (S)-acetoin + NAD(+) = diacetyl + NADH + H(+). Functionally, catalyzes the reversible reduction of (S)-acetoin to 2,3-butanediol in the presence of NADH. The chain is Diacetyl reductase [(S)-acetoin forming] (budC) from Klebsiella pneumoniae.